A 293-amino-acid polypeptide reads, in one-letter code: MPELPEVETVRLGLQPAMEGARFDTVALRRADLRFPFQPDFTDRLTGQTVTGLSRRAKYLLADLSSGDALLMHLGMSGSFRVIEPGGEATPGDFHHPRSEDRSHDHVVFSMSSGKTVVFNDPRRFGYMKLFRRAAIEDEPFLKGLGPEPLGNAFDASMLARACAGKKTSLKAALLDQRVVAGLGNIYVCEALFRAHLSPKRLAATLATKAGGPTERAEKLVEAIRTVLHEAIQAGGSSLRDHRQTSGELGYFQHSFAVYDRESEPCRTKGCGGVVKRFVQNGRSTFCCPKCQK.

The active-site Schiff-base intermediate with DNA is the P2. Catalysis depends on E3, which acts as the Proton donor. K58 serves as the catalytic Proton donor; for beta-elimination activity. DNA is bound by residues H104, R123, and K166. Residues 257 to 293 form an FPG-type zinc finger; the sequence is AVYDRESEPCRTKGCGGVVKRFVQNGRSTFCCPKCQK. R283 serves as the catalytic Proton donor; for delta-elimination activity.

Belongs to the FPG family. Monomer. Zn(2+) serves as cofactor.

It carries out the reaction Hydrolysis of DNA containing ring-opened 7-methylguanine residues, releasing 2,6-diamino-4-hydroxy-5-(N-methyl)formamidopyrimidine.. The enzyme catalyses 2'-deoxyribonucleotide-(2'-deoxyribose 5'-phosphate)-2'-deoxyribonucleotide-DNA = a 3'-end 2'-deoxyribonucleotide-(2,3-dehydro-2,3-deoxyribose 5'-phosphate)-DNA + a 5'-end 5'-phospho-2'-deoxyribonucleoside-DNA + H(+). In terms of biological role, involved in base excision repair of DNA damaged by oxidation or by mutagenic agents. Acts as a DNA glycosylase that recognizes and removes damaged bases. Has a preference for oxidized purines, such as 7,8-dihydro-8-oxoguanine (8-oxoG). Has AP (apurinic/apyrimidinic) lyase activity and introduces nicks in the DNA strand. Cleaves the DNA backbone by beta-delta elimination to generate a single-strand break at the site of the removed base with both 3'- and 5'-phosphates. The polypeptide is Formamidopyrimidine-DNA glycosylase (Rhodopseudomonas palustris (strain BisA53)).